A 219-amino-acid polypeptide reads, in one-letter code: 7-cyano-7-deazaguanine synthase (219 aa).

An ATP-binding site is contributed by 10 to 20 (FSGGQDSTTCL). Zn(2+) is bound by residues cysteine 186, cysteine 195, cysteine 198, and cysteine 201.

The protein belongs to the QueC family. In terms of assembly, homodimer. The cofactor is Zn(2+).

It carries out the reaction 7-carboxy-7-deazaguanine + NH4(+) + ATP = 7-cyano-7-deazaguanine + ADP + phosphate + H2O + H(+). It participates in purine metabolism; 7-cyano-7-deazaguanine biosynthesis. Functionally, catalyzes the ATP-dependent conversion of 7-carboxy-7-deazaguanine (CDG) to 7-cyano-7-deazaguanine (preQ(0)). The chain is 7-cyano-7-deazaguanine synthase from Bacillus velezensis (strain DSM 23117 / BGSC 10A6 / LMG 26770 / FZB42) (Bacillus amyloliquefaciens subsp. plantarum).